Consider the following 135-residue polypeptide: Endoribonuclease YbeY (135 aa).

Positions 94, 98, and 104 each coordinate Zn(2+).

Belongs to the endoribonuclease YbeY family. Zn(2+) serves as cofactor.

The protein localises to the cytoplasm. Single strand-specific metallo-endoribonuclease involved in late-stage 70S ribosome quality control and in maturation of the 3' terminus of the 16S rRNA. The polypeptide is Endoribonuclease YbeY (Campylobacter jejuni subsp. jejuni serotype O:2 (strain ATCC 700819 / NCTC 11168)).